A 645-amino-acid chain; its full sequence is Phosphomethylpyrimidine synthase (645 aa).

Substrate contacts are provided by residues N235, M264, Y293, H329, 349–351 (SRG), 390–393 (DGLR), and E429. Position 433 (H433) interacts with Zn(2+). Y456 is a binding site for substrate. H497 is a binding site for Zn(2+). [4Fe-4S] cluster contacts are provided by C577, C580, and C585.

This sequence belongs to the ThiC family. As to quaternary structure, homodimer. [4Fe-4S] cluster serves as cofactor.

The catalysed reaction is 5-amino-1-(5-phospho-beta-D-ribosyl)imidazole + S-adenosyl-L-methionine = 4-amino-2-methyl-5-(phosphooxymethyl)pyrimidine + CO + 5'-deoxyadenosine + formate + L-methionine + 3 H(+). The protein operates within cofactor biosynthesis; thiamine diphosphate biosynthesis. Functionally, catalyzes the synthesis of the hydroxymethylpyrimidine phosphate (HMP-P) moiety of thiamine from aminoimidazole ribotide (AIR) in a radical S-adenosyl-L-methionine (SAM)-dependent reaction. This chain is Phosphomethylpyrimidine synthase, found in Vibrio cholerae serotype O1 (strain ATCC 39541 / Classical Ogawa 395 / O395).